The primary structure comprises 204 residues: GTP cyclohydrolase 1 (204 aa).

Positions 92, 95, and 165 each coordinate Zn(2+).

This sequence belongs to the GTP cyclohydrolase I family. As to quaternary structure, homomer.

It carries out the reaction GTP + H2O = 7,8-dihydroneopterin 3'-triphosphate + formate + H(+). It functions in the pathway cofactor biosynthesis; 7,8-dihydroneopterin triphosphate biosynthesis; 7,8-dihydroneopterin triphosphate from GTP: step 1/1. The chain is GTP cyclohydrolase 1 from Mycobacteroides abscessus (strain ATCC 19977 / DSM 44196 / CCUG 20993 / CIP 104536 / JCM 13569 / NCTC 13031 / TMC 1543 / L948) (Mycobacterium abscessus).